The chain runs to 282 residues: U1 small nuclear ribonucleoprotein A (282 aa).

At Ala-2 the chain carries N-acetylalanine. The 80-residue stretch at 10 to 89 folds into the RRM 1 domain; it reads HTIYINNLNE…KPMRIQYAKT (80 aa). The residue at position 60 (Lys-60) is an N6-acetyllysine. The tract at residues 100–132 is disordered; the sequence is TFVERDRKREKRKPKSQETPATKKAVQGGGATP. Thr-131 is modified (phosphothreonine). Position 152 is an omega-N-methylarginine (Arg-152). Residues 208–282 form the RRM 2 domain; it reads HILFLTNLPE…NAMKISFAKK (75 aa).

The protein belongs to the RRM U1 A/B'' family. U1 snRNP is composed of the 7 core Sm proteins SNRPB, SNRPD1, SNRPD2, SNRPD3, SNRPE, SNRPF and SNRPG that assemble in a heptameric protein ring on the Sm site of the small nuclear RNA to form the core snRNP, and at least three U1 snRNP-specific proteins SNRNP70/U1-70K, SNRPA/U1-A and SNRPC/U1-C. Interacts with SFPQ; component of a snRNP-free complex with SFPQ. Interacts with IVNS1ABP (via BACK domain); the interaction is indirect.

The protein resides in the nucleus. Its function is as follows. Component of the spliceosomal U1 snRNP, which is essential for recognition of the pre-mRNA 5' splice-site and the subsequent assembly of the spliceosome. U1 snRNP is the first snRNP to interact with pre-mRNA. This interaction is required for the subsequent binding of U2 snRNP and the U4/U6/U5 tri-snRNP. SNRPA binds stem loop II of U1 snRNA. In a snRNP-free form (SF-A) may be involved in coupled pre-mRNA splicing and polyadenylation process. May bind preferentially to the 5'-UGCAC-3' motif on RNAs. The chain is U1 small nuclear ribonucleoprotein A (SNRPA) from Homo sapiens (Human).